A 221-amino-acid chain; its full sequence is 7-cyano-7-deazaguanine synthase (221 aa).

ATP is bound at residue 8–18 (MSGGMDSTLCA). Cys-187, Cys-195, Cys-198, and Cys-201 together coordinate Zn(2+).

It belongs to the QueC family. Zn(2+) is required as a cofactor.

It catalyses the reaction 7-carboxy-7-deazaguanine + NH4(+) + ATP = 7-cyano-7-deazaguanine + ADP + phosphate + H2O + H(+). It participates in purine metabolism; 7-cyano-7-deazaguanine biosynthesis. Catalyzes the ATP-dependent conversion of 7-carboxy-7-deazaguanine (CDG) to 7-cyano-7-deazaguanine (preQ(0)). The protein is 7-cyano-7-deazaguanine synthase of Campylobacter concisus (strain 13826).